The primary structure comprises 526 residues: Thioredoxin reductase 2, mitochondrial (526 aa).

Residues 1 to 36 (MAAIVAALRGSSGRFRPQTRVLTRGTRGAAGAASAA) constitute a mitochondrion transit peptide. 43 to 72 (DLLVIGGGSGGLACAKEAAQLGRKVAVADY) serves as a coordination point for FAD. The residue at position 81 (Lys81) is an N6-succinyllysine. The cysteines at positions 88 and 93 are disulfide-linked. N6-succinyllysine is present on residues Lys177 and Lys331. Catalysis depends on His499, which acts as the Proton acceptor. The segment at residues 524-525 (CU) is a cross-link (cysteinyl-selenocysteine (Cys-Sec)). Position 525 (Sec525) is a non-standard amino acid, selenocysteine.

Belongs to the class-I pyridine nucleotide-disulfide oxidoreductase family. As to quaternary structure, homodimer. The cofactor is FAD. As to expression, expressed in liver, kidney, adrenal gland and heart.

The protein resides in the mitochondrion. The catalysed reaction is [thioredoxin]-dithiol + NADP(+) = [thioredoxin]-disulfide + NADPH + H(+). Involved in the control of reactive oxygen species levels and the regulation of mitochondrial redox homeostasis. Maintains mitochondrial thioredoxin in a reduced state. May play a role in redox-regulated cell signaling. The sequence is that of Thioredoxin reductase 2, mitochondrial (Txnrd2) from Rattus norvegicus (Rat).